We begin with the raw amino-acid sequence, 172 residues long: Shikimate kinase (172 aa).

14–19 (GAGKST) serves as a coordination point for ATP. S18 is a binding site for Mg(2+). Substrate is bound by residues D36, R60, and G82. An ATP-binding site is contributed by R120. Substrate is bound at residue R140. Q157 provides a ligand contact to ATP.

The protein belongs to the shikimate kinase family. In terms of assembly, monomer. Requires Mg(2+) as cofactor.

Its subcellular location is the cytoplasm. It carries out the reaction shikimate + ATP = 3-phosphoshikimate + ADP + H(+). It participates in metabolic intermediate biosynthesis; chorismate biosynthesis; chorismate from D-erythrose 4-phosphate and phosphoenolpyruvate: step 5/7. Functionally, catalyzes the specific phosphorylation of the 3-hydroxyl group of shikimic acid using ATP as a cosubstrate. The sequence is that of Shikimate kinase from Pseudoalteromonas translucida (strain TAC 125).